Consider the following 89-residue polypeptide: Small ribosomal subunit protein uS15 (89 aa).

Belongs to the universal ribosomal protein uS15 family. As to quaternary structure, part of the 30S ribosomal subunit. Forms a bridge to the 50S subunit in the 70S ribosome, contacting the 23S rRNA.

Functionally, one of the primary rRNA binding proteins, it binds directly to 16S rRNA where it helps nucleate assembly of the platform of the 30S subunit by binding and bridging several RNA helices of the 16S rRNA. Forms an intersubunit bridge (bridge B4) with the 23S rRNA of the 50S subunit in the ribosome. The sequence is that of Small ribosomal subunit protein uS15 from Nitratidesulfovibrio vulgaris (strain DP4) (Desulfovibrio vulgaris).